The following is a 52-amino-acid chain: Eukaryotic translation initiation factor 5A (52 aa).

K42 carries the hypusine modification.

Belongs to the eIF-5A family. Lys-42 undergoes hypusination, a unique post-translational modification that consists in the addition of a butylamino group from spermidine to lysine side chain, leading to the formation of the unusual amino acid hypusine. eIF-5As are the only known proteins to undergo this modification, which is essential for their function.

It localises to the cytoplasm. In terms of biological role, translation factor that promotes translation elongation and termination, particularly upon ribosome stalling at specific amino acid sequence contexts. Binds between the exit (E) and peptidyl (P) site of the ribosome and promotes rescue of stalled ribosome: specifically required for efficient translation of polyproline-containing peptides as well as other motifs that stall the ribosome. Acts as a ribosome quality control (RQC) cofactor by joining the RQC complex to facilitate peptidyl transfer during CAT tailing step. The chain is Eukaryotic translation initiation factor 5A from Schistosoma mansoni (Blood fluke).